The sequence spans 267 residues: Sulfate transporter CysZ (267 aa).

The next 4 membrane-spanning stretches (helical) occupy residues 29–49, 73–93, 149–169, and 212–232; these read FVIM…WLFI, ILLI…FTTL, IILF…PIIV, and GLVM…PVAV.

The protein belongs to the CysZ family.

It is found in the cell inner membrane. In terms of biological role, high affinity, high specificity proton-dependent sulfate transporter, which mediates sulfate uptake. Provides the sulfur source for the cysteine synthesis pathway. This chain is Sulfate transporter CysZ, found in Pasteurella multocida (strain Pm70).